Consider the following 257-residue polypeptide: Zinc finger protein 8 (257 aa).

Disordered stretches follow at residues 48-92, 108-128, and 214-238; these read GDNS…NNNN, QALGGHQNAHKRERQHAKRGS, and GVYSSSPASAFRSHEQETNKEPNNW. Positions 50–65 are enriched in polar residues; sequence NSDNLSAEPSDHQTTT. Basic and acidic residues predominate over residues 66–92; the sequence is KNDESSENIKDKDKEKDKDKDKDNNNN. The C2H2-type zinc finger occupies 95–117; it reads FECHYCFRNFPTSQALGGHQNAH. Over residues 115–126 the composition is skewed to basic residues; the sequence is NAHKRERQHAKR.

Expressed in developing cauline leaves.

Its subcellular location is the nucleus. Probable transcription factor required for the initiation of inflorescence trichomes in response to gibberellin and cytokinin. Is not involved in the regulation of trichome branching. Is functionally equivalent to GIS2. Acts as a negative regulator of abscisic acid (ABA) signaling during germination and early seedling development. The protein is Zinc finger protein 8 of Arabidopsis thaliana (Mouse-ear cress).